The primary structure comprises 349 residues: MRILGIETSCDETGIAIYDDGLGDSPEGILAHRLYSQIAVHADYGGVVPELASRDHVRKTIPLIKEVLADANLTPKDLDGVAYTAGPGLVGALLVGCSIGRSLAYGWELPAVPVHHMEGHLLAPMLEDDVPEFPFVALLVSGGHTMLVRVDAIGEYKLLGESVDDAAGEAFDKTAKLLGLDYPGGPALSKMAESGEAGRFKLPRPMTDRPGLDFSFSGLKTAAGTLVRKECLNLSDSDLKQTHADIANAFQQAVVDTLAIKCKRALQQEKLSRLVIAGGVSANTALREQLAITTKKLGGSVFYPRPEFCTDNGAMIAYAGLQRLKAGTDADLTFKANPRWALDSLPPVK.

Positions 116 and 120 each coordinate Fe cation. Substrate contacts are provided by residues 139–143 (LVSGG), Asp-172, Gly-185, and Asn-283. Fe cation is bound at residue Asp-311.

It belongs to the KAE1 / TsaD family. Fe(2+) is required as a cofactor.

It localises to the cytoplasm. It catalyses the reaction L-threonylcarbamoyladenylate + adenosine(37) in tRNA = N(6)-L-threonylcarbamoyladenosine(37) in tRNA + AMP + H(+). Required for the formation of a threonylcarbamoyl group on adenosine at position 37 (t(6)A37) in tRNAs that read codons beginning with adenine. Is involved in the transfer of the threonylcarbamoyl moiety of threonylcarbamoyl-AMP (TC-AMP) to the N6 group of A37, together with TsaE and TsaB. TsaD likely plays a direct catalytic role in this reaction. The sequence is that of tRNA N6-adenosine threonylcarbamoyltransferase from Colwellia psychrerythraea (strain 34H / ATCC BAA-681) (Vibrio psychroerythus).